The following is a 220-amino-acid chain: RNA polymerase sigma GP28 factor (220 aa).

Functionally, sigma factors are initiation factors that promote the attachment of RNA polymerase to specific initiation sites and are then released. This sigma factor is responsible for the expression of the phage middle genes. The protein is RNA polymerase sigma GP28 factor (28) of Bacillus subtilis (Bacteriophage SP01).